A 136-amino-acid chain; its full sequence is Small ribosomal subunit protein uS19 (136 aa).

The protein belongs to the universal ribosomal protein uS19 family.

Functionally, protein S19 forms a complex with S13 that binds strongly to the 16S ribosomal RNA. The chain is Small ribosomal subunit protein uS19 from Methanocorpusculum labreanum (strain ATCC 43576 / DSM 4855 / Z).